Here is a 405-residue protein sequence, read N- to C-terminus: METPKHIRGVWRRDSVLKHREKKFNYSFWNCSVHEHFISITNNREIHILPDDLLLPRCPSIRAILFKQIPSFKFSGSRSGPPGTVTSLYVYGHSKNLIKIKPMVVSECEQELIFKITFALECTIPPGSMEIFILPITFLKLDGLYLLCLEDYTSRIMSTSCMQMGTYLASETPQVFLKGGPVLNKHEPMPYLMAQKTKPFDKKMARVHTVQNEVCEVNSIYRGENHVKVAIQKDSEDINFLDTVVVGLTMTNRALVAFEYNPYFSCPWDWKRQSIPIIYDGPCIRIPAGRLAPVKYNNTYSSIYPNATAIITNSDSCADFHISDCEWKPGKTACIVVTNTSTISVTISSGTHLGEAVFILAPKFFCRKIMSKTHVQKLSSAICLPGNVTINSNKVPKLADLSTYK.

This is an uncharacterized protein from Saimiri sciureus (Common squirrel monkey).